A 198-amino-acid chain; its full sequence is uncharacterized protein (198 aa).

Disordered stretches follow at residues 15-69 (RLGQ…KDTR) and 172-198 (FSVK…LWGL). 2 stretches are compositionally biased toward basic and acidic residues: residues 37–49 (HKSF…DQSR) and 56–69 (FNEK…KDTR). Residues 176 to 186 (ESSNLSNNDSD) show a composition bias toward low complexity. Residues 187 to 198 (ASLDEDTLLWGL) are compositionally biased toward acidic residues.

Its subcellular location is the nucleus. This is an uncharacterized protein from Schizosaccharomyces pombe (strain 972 / ATCC 24843) (Fission yeast).